A 315-amino-acid chain; its full sequence is MTGQGQSASGSSAWSTVFRHVRYENLIAGVSGGVLSNLALHPLDLVKIRFAVSDGLELRPKYNGILHCLTTIWKLDGLRGLYQGVTPNIWGAGLSWGLYFFFYNAIKSYKTEGRAERLEATEYLVSAAEAGAMTLCITNPLWVTKTRLMLQYDAVVNSPHRQYKGMFDTLVKIYKYEGVRGLYKGFVPGLFGTSHGALQFMAYELLKLKYNQHINRLPEAQLSTVEYISVAALSKIFAVAATYPYQVVRARLQDQHMFYSGVIDVITKTWRKEGVGGFYKGIAPNLIRVTPACCITFVVYENVSHFLLDLREKRK.

3 Solcar repeats span residues 20–109 (HVRY…IKSY), 118–209 (LEAT…LKLK), and 222–306 (LSTV…VSHF). Helical transmembrane passes span 26-43 (LIAG…LHPL), 89-106 (IWGA…YNAI), 123-143 (YLVS…PLWV), 186-203 (FVPG…FMAY), 227-243 (YISV…AATY), and 281-300 (GIAP…FVVY).

The protein belongs to the mitochondrial carrier (TC 2.A.29) family. Ubiquitous.

It is found in the mitochondrion inner membrane. The enzyme catalyses FAD(in) = FAD(out). Its function is as follows. Facilitates flavin adenine dinucleotide (FAD) translocation across the mitochondrial inner membrane into the mitochondrial matrix where it acts as a redox cofactor to assist flavoenzyme activities in fundamental metabolic processes including fatty acid beta-oxidation, amino acid and choline metabolism as well as mitochondrial electron transportation. In particular, provides FAD to DLD dehydrogenase of the glycine cleavage system, part of mitochondrial one-carbon metabolic pathway involved in neural tube closure in early embryogenesis. The polypeptide is Solute carrier family 25 member 32 (Homo sapiens (Human)).